Reading from the N-terminus, the 320-residue chain is Short-chain dehydrogenase/reductase ATR7 (320 aa).

Residues S32, I34, Q55, D70, N93, K134, Y167, K171, and T202 each coordinate NADP(+). Y167 functions as the Proton acceptor in the catalytic mechanism. Residue K171 is the Lowers pKa of active site Tyr of the active site.

It belongs to the short-chain dehydrogenases/reductases (SDR) family.

It participates in mycotoxin biosynthesis. Its function is as follows. Short-chain dehydrogenase/reductase; part of the core atranone cluster (CAC) which products are predicted to catalyze most or all steps of mycotoxin atranone synthesis, starting from geranylgeranyl pyrophosphate (GGPP). The initial cyclization of GGPP to dolabellane is probably performed by the terpene cyclase ATR13. The Baeyer-Villiger oxidation near the end of the atranone synthesis, which converts atranones D and E to atranones F and G is predicted to be catalyzed by the monooxygenase ATR8. Of the CAC's other predicted gene products, the reducing PKS ATR6 might synthesize a polyketide chain. This polyketide is probably transferred onto the atranone backbone by the polyketide transferase ATR5. Other predicted CAC products include 4 oxygenases (ATR2, ATR3, ATR4, and ATR14), 3 short-chain reductases (ATR7, ATR9, and ATR10), and a methyltransferase (ATR12). These may all be involved in the various steps of atranone biosynthesis, although their specific roles must await experimental determination. The polypeptide is Short-chain dehydrogenase/reductase ATR7 (Stachybotrys chlorohalonatus (strain IBT 40285)).